The following is a 101-amino-acid chain: Small ribosomal subunit protein uS14m (101 aa).

Belongs to the universal ribosomal protein uS14 family. Component of the mitochondrial ribosome small subunit (28S) which comprises a 12S rRNA and about 30 distinct proteins. Interacts with LIAT1.

The protein resides in the mitochondrion. The sequence is that of Small ribosomal subunit protein uS14m (mrps14) from Dictyostelium citrinum (Slime mold).